Here is a 953-residue protein sequence, read N- to C-terminus: Coatomer subunit beta (953 aa).

An N-acetylthreonine modification is found at Thr-2. 6 HEAT repeats span residues 96-131 (HEMILVCDAYRKDLQHPNEFIRGSTLRFLCKLKEAE), 132-168 (LLEPLMPAIRACLEHRHSYVRRNAVLAIYTIYRNFEH), 240-276 (SERARFIRCIYNLLQSSSPAVKYEAAGTLVTLSSAPT), 277-314 (AIKAAAQCYIDLIIKESDNNVKLIVLDRLIELKEHPAH), 316-353 (RVLQDLVMDILRVLSTPDLEVRKKTLQLALDLVSSRNV), and 396-433 (DMAANVIPVLMEFLSDSNEAAAADVLEFVREAIQRFDN). Position 494 is an N6-acetyllysine (Lys-494).

Oligomeric complex that consists of at least the alpha, beta, beta', gamma, delta, epsilon and zeta subunits. Interacts with ARF1 (myristoylated); this interaction is required for binding of COPB1 to Golgi membranes. Interacts with CAPN8 and PRKCE. Interacts with SCYL1. Interacts with COPG1. Interacts (via trunk domain) with ARF1 (via switch I region); the interaction is direct. Interacts with KCNK2 (via N-terminus); this interaction increases the channel-mediated whole cell currents and promotes plasma membrane expression of KCNK2. Interacts with STX17. Interacts with TMEM115. Interacts with TMEM41B. Proteolytically cleaved between Ser-528 and Ser-529 by CAPN8.

The protein resides in the cytoplasm. It localises to the cytosol. It is found in the golgi apparatus membrane. The protein localises to the cytoplasmic vesicle. Its subcellular location is the COPI-coated vesicle membrane. The protein resides in the cell membrane. It localises to the endoplasmic reticulum-Golgi intermediate compartment. Its function is as follows. The coatomer is a cytosolic protein complex that binds to dilysine motifs and reversibly associates with Golgi non-clathrin-coated vesicles, which further mediate biosynthetic protein transport from the ER, via the Golgi up to the trans Golgi network. Coatomer complex is required for budding from Golgi membranes, and is essential for the retrograde Golgi-to-ER transport of dilysine-tagged proteins. In mammals, the coatomer can only be recruited by membranes associated to ADP-ribosylation factors (ARFs), which are small GTP-binding proteins; the complex also influences the Golgi structural integrity, as well as the processing, activity, and endocytic recycling of LDL receptors. Involved in the Golgi disassembly and reassembly processes during cell cycle. Plays a functional role in facilitating the transport of kappa-type opioid receptor mRNAs into axons and enhances translation of these proteins. Required for limiting lipid storage in lipid droplets. Involved in lipid homeostasis by regulating the presence of perilipin family members PLIN2 and PLIN3 at the lipid droplet surface and promoting the association of adipocyte surface triglyceride lipase (PNPLA2) with the lipid droplet to mediate lipolysis. Involved in autophagy by playing a role in early endosome function. Plays a role in organellar compartmentalization of secretory compartments including endoplasmic reticulum (ER)-Golgi intermediate compartment (ERGIC), Golgi, trans-Golgi network (TGN) and recycling endosomes, and in biosynthetic transport of CAV1. The sequence is that of Coatomer subunit beta (COPB1) from Bos taurus (Bovine).